The primary structure comprises 380 residues: Homoserine O-acetyltransferase (380 aa).

Residues 70–366 (NAVLVFHALT…SPHGHDAFLI (297 aa)) enclose the AB hydrolase-1 domain. The Nucleophile role is filled by serine 186. Substrate is bound at residue arginine 250. Active-site residues include aspartate 333 and histidine 361. Aspartate 362 contacts substrate.

It belongs to the AB hydrolase superfamily. MetX family. In terms of assembly, homodimer.

It localises to the cytoplasm. It catalyses the reaction L-homoserine + acetyl-CoA = O-acetyl-L-homoserine + CoA. Its pathway is amino-acid biosynthesis; L-methionine biosynthesis via de novo pathway; O-acetyl-L-homoserine from L-homoserine: step 1/1. Functionally, transfers an acetyl group from acetyl-CoA to L-homoserine, forming acetyl-L-homoserine. This Thermus thermophilus (strain ATCC 27634 / DSM 579 / HB8) protein is Homoserine O-acetyltransferase.